Reading from the N-terminus, the 173-residue chain is Alpha-crystallin A chain (173 aa).

Met-1 carries the N-acetylmethionine modification. The tract at residues 1 to 63 is required for complex formation with BFSP1 and BFSP2; it reads MDIAIQHPWF…RTVLDSGISE (63 aa). A Deamidated glutamine; partial modification is found at Gln-6. At Ser-45 the chain carries Phosphoserine. At Gln-50 the chain carries Deamidated glutamine; partial. The region spanning 52-162 is the sHSP domain; that stretch reads LFRTVLDSGI…GHSERAIPVS (111 aa). Lys-70 is modified (N6-acetyllysine). Gln-90 bears the Deamidated glutamine; partial mark. An N6-acetyllysine modification is found at Lys-99. His-100 is a Zn(2+) binding site. A Deamidated asparagine; partial modification is found at Asn-101. Residues Glu-102 and His-107 each coordinate Zn(2+). A Phosphoserine modification is found at Ser-122. Asn-123 carries the post-translational modification Deamidated asparagine; partial. Residues 144–173 are disordered; that stretch reads PKVPSGVDAGHSERAIPVSREEKPSSAPSS. Residues 153 to 167 are compositionally biased toward basic and acidic residues; the sequence is GHSERAIPVSREEKP. A Zn(2+)-binding site is contributed by His-154. The O-linked (GlcNAc) serine glycan is linked to Ser-162.

This sequence belongs to the small heat shock protein (HSP20) family. As to quaternary structure, heteromer composed of three CRYAA and one CRYAB subunits. Inter-subunit bridging via zinc ions enhances stability, which is crucial as there is no protein turn over in the lens. Can also form homodimers and homotetramers (dimers of dimers) which serve as the building blocks of homooligomers. Within homooligomers, the zinc-binding motif is created from residues of 3 different molecules. His-100 and Glu-102 from one molecule are ligands of the zinc ion, and His-107 and His-154 residues from additional molecules complete the site with tetrahedral coordination geometry. Part of a complex required for lens intermediate filament formation composed of BFSP1, BFSP2 and CRYAA. Post-translationally, acetylation at Lys-70 may increase chaperone activity. In terms of processing, undergoes age-dependent proteolytical cleavage at the C-terminus.

It is found in the cytoplasm. The protein resides in the nucleus. Contributes to the transparency and refractive index of the lens. Acts as a chaperone, preventing aggregation of various proteins under a wide range of stress conditions. Required for the correct formation of lens intermediate filaments as part of a complex composed of BFSP1, BFSP2 and CRYAA. The polypeptide is Alpha-crystallin A chain (CRYAA) (Ovis aries (Sheep)).